Reading from the N-terminus, the 224-residue chain is Cysteine-rich hydrophobic domain-containing protein 1 (224 aa).

Positions 1-80 are disordered; sequence MSILLPNMAE…PPPRVVSEEH (80 aa). The span at 13 to 25 shows a compositional bias: acidic residues; it reads TISELEEEEEEEA. Low complexity predominate over residues 26-40; sequence ATSSSSPSSSSSVSG. Residues 41–69 show a composition bias toward acidic residues; sequence PDDDEEDEEEEEEEEEEEEEEEEEEEEEA. Residues 42–70 are a coiled coil; sequence DDDEEDEEEEEEEEEEEEEEEEEEEEEAP.

This sequence belongs to the CHIC family. In terms of processing, palmitoylated. Equally expressed in various parts of the brain.

It is found in the cell membrane. It localises to the cytoplasmic vesicle. The protein is Cysteine-rich hydrophobic domain-containing protein 1 (CHIC1) of Homo sapiens (Human).